A 344-amino-acid chain; its full sequence is Holliday junction branch migration complex subunit RuvB (344 aa).

Residues Met-1–Tyr-185 form a large ATPase domain (RuvB-L) region. ATP-binding positions include Leu-24, Arg-25, Gly-66, Lys-69, Thr-70, Ser-71, Glu-132–Phe-134, Arg-175, Tyr-185, and Arg-222. Thr-70 is a Mg(2+) binding site. A small ATPAse domain (RuvB-S) region spans residues Glu-186 to Asp-256. The segment at Glu-259–Glu-344 is head domain (RuvB-H). The DNA site is built by Arg-314 and Arg-319.

It belongs to the RuvB family. Homohexamer. Forms an RuvA(8)-RuvB(12)-Holliday junction (HJ) complex. HJ DNA is sandwiched between 2 RuvA tetramers; dsDNA enters through RuvA and exits via RuvB. An RuvB hexamer assembles on each DNA strand where it exits the tetramer. Each RuvB hexamer is contacted by two RuvA subunits (via domain III) on 2 adjacent RuvB subunits; this complex drives branch migration. In the full resolvosome a probable DNA-RuvA(4)-RuvB(12)-RuvC(2) complex forms which resolves the HJ.

The protein resides in the cytoplasm. It catalyses the reaction ATP + H2O = ADP + phosphate + H(+). In terms of biological role, the RuvA-RuvB-RuvC complex processes Holliday junction (HJ) DNA during genetic recombination and DNA repair, while the RuvA-RuvB complex plays an important role in the rescue of blocked DNA replication forks via replication fork reversal (RFR). RuvA specifically binds to HJ cruciform DNA, conferring on it an open structure. The RuvB hexamer acts as an ATP-dependent pump, pulling dsDNA into and through the RuvAB complex. RuvB forms 2 homohexamers on either side of HJ DNA bound by 1 or 2 RuvA tetramers; 4 subunits per hexamer contact DNA at a time. Coordinated motions by a converter formed by DNA-disengaged RuvB subunits stimulates ATP hydrolysis and nucleotide exchange. Immobilization of the converter enables RuvB to convert the ATP-contained energy into a lever motion, pulling 2 nucleotides of DNA out of the RuvA tetramer per ATP hydrolyzed, thus driving DNA branch migration. The RuvB motors rotate together with the DNA substrate, which together with the progressing nucleotide cycle form the mechanistic basis for DNA recombination by continuous HJ branch migration. Branch migration allows RuvC to scan DNA until it finds its consensus sequence, where it cleaves and resolves cruciform DNA. This chain is Holliday junction branch migration complex subunit RuvB, found in Mycobacterium tuberculosis (strain ATCC 25177 / H37Ra).